Here is a 382-residue protein sequence, read N- to C-terminus: D-galactonate dehydratase (382 aa).

Mg(2+) is bound at residue Asp183. The Proton donor role is filled by His185. Glu209 and Glu235 together coordinate Mg(2+). His285 serves as the catalytic Proton acceptor.

This sequence belongs to the mandelate racemase/muconate lactonizing enzyme family. GalD subfamily. Mg(2+) is required as a cofactor.

It carries out the reaction D-galactonate = 2-dehydro-3-deoxy-D-galactonate + H2O. Its pathway is carbohydrate acid metabolism; D-galactonate degradation; D-glyceraldehyde 3-phosphate and pyruvate from D-galactonate: step 1/3. Catalyzes the dehydration of D-galactonate to 2-keto-3-deoxy-D-galactonate. This Variovorax paradoxus (strain S110) protein is D-galactonate dehydratase.